Reading from the N-terminus, the 173-residue chain is Large ribosomal RNA subunit accumulation protein YceD (173 aa).

Belongs to the DUF177 domain family.

Its function is as follows. Plays a role in synthesis, processing and/or stability of 23S rRNA. The sequence is that of Large ribosomal RNA subunit accumulation protein YceD (yceD) from Escherichia coli O157:H7.